The primary structure comprises 192 residues: Ion-translocating oxidoreductase complex subunit B (192 aa).

The tract at residues 1 to 26 (MNAIWIAVAAVSLLGLAFGAILGYAS) is hydrophobic. One can recognise a 4Fe-4S domain in the interval 32–91 (EDDPVVEKIDEILPQSQCGQCGYPGCRPYAEAISCNGEKINRCAPGGEAVMLKIAELLNV). [4Fe-4S] cluster contacts are provided by Cys-49, Cys-52, Cys-57, Cys-74, Cys-117, Cys-120, Cys-123, Cys-127, Cys-147, Cys-150, Cys-153, and Cys-157. 4Fe-4S ferredoxin-type domains are found at residues 108–137 (MVAV…GATR) and 138–167 (AMHT…LQPV).

Belongs to the 4Fe4S bacterial-type ferredoxin family. RnfB subfamily. In terms of assembly, the complex is composed of six subunits: RsxA, RsxB, RsxC, RsxD, RsxE and RsxG. [4Fe-4S] cluster is required as a cofactor.

It localises to the cell inner membrane. Its function is as follows. Part of a membrane-bound complex that couples electron transfer with translocation of ions across the membrane. Required to maintain the reduced state of SoxR. This Escherichia coli O8 (strain IAI1) protein is Ion-translocating oxidoreductase complex subunit B.